The chain runs to 102 residues: Small ribosomal subunit protein bS6 (102 aa).

The protein belongs to the bacterial ribosomal protein bS6 family.

Its function is as follows. Binds together with bS18 to 16S ribosomal RNA. In Deinococcus radiodurans (strain ATCC 13939 / DSM 20539 / JCM 16871 / CCUG 27074 / LMG 4051 / NBRC 15346 / NCIMB 9279 / VKM B-1422 / R1), this protein is Small ribosomal subunit protein bS6 (rpsF).